Consider the following 447-residue polypeptide: Lipid II isoglutaminyl synthase (glutamine-hydrolyzing) subunit MurT (447 aa).

Residues cysteine 205, cysteine 208, cysteine 227, and cysteine 230 each contribute to the Zn(2+) site. Aspartate 355 is an active-site residue.

The protein belongs to the MurCDEF family. MurT subfamily. Forms a heterodimer with GatD.

It carries out the reaction beta-D-GlcNAc-(1-&gt;4)-Mur2Ac(oyl-L-Ala-gamma-D-Glu-L-Lys-D-Ala-D-Ala)-di-trans,octa-cis-undecaprenyl diphosphate + L-glutamine + ATP + H2O = beta-D-GlcNAc-(1-&gt;4)-Mur2Ac(oyl-L-Ala-D-isoglutaminyl-L-Lys-D-Ala-D-Ala)-di-trans,octa-cis-undecaprenyl diphosphate + L-glutamate + ADP + phosphate + H(+). The enzyme catalyses beta-D-GlcNAc-(1-&gt;4)-Mur2Ac(oyl-L-Ala-gamma-D-Glu-L-Lys-D-Ala-D-Ala)-di-trans,octa-cis-undecaprenyl diphosphate + ATP = beta-D-GlcNAc-(1-&gt;4)-Mur2Ac(oyl-L-Ala-gamma-D-O-P-Glu-L-Lys-D-Ala-D-Ala)-di-trans,octa-cis-undecaprenyl diphosphate + ADP. It catalyses the reaction beta-D-GlcNAc-(1-&gt;4)-Mur2Ac(oyl-L-Ala-gamma-D-O-P-Glu-L-Lys-D-Ala-D-Ala)-di-trans,octa-cis-undecaprenyl diphosphate + NH4(+) = beta-D-GlcNAc-(1-&gt;4)-Mur2Ac(oyl-L-Ala-D-isoglutaminyl-L-Lys-D-Ala-D-Ala)-di-trans,octa-cis-undecaprenyl diphosphate + phosphate + H(+). It functions in the pathway cell wall biogenesis; peptidoglycan biosynthesis. Functionally, the lipid II isoglutaminyl synthase complex catalyzes the formation of alpha-D-isoglutamine in the cell wall lipid II stem peptide. The MurT subunit catalyzes the ATP-dependent amidation of D-glutamate residue of lipid II, converting it to an isoglutamine residue. The chain is Lipid II isoglutaminyl synthase (glutamine-hydrolyzing) subunit MurT from Streptococcus pneumoniae (strain ATCC BAA-255 / R6).